The primary structure comprises 712 residues: Ribosomal RNA large subunit methyltransferase K/L (712 aa).

The region spanning 42-153 (QALRIVMWSR…KGRASLSIDL (112 aa)) is the THUMP domain.

Belongs to the methyltransferase superfamily. RlmKL family.

It localises to the cytoplasm. It carries out the reaction guanosine(2445) in 23S rRNA + S-adenosyl-L-methionine = N(2)-methylguanosine(2445) in 23S rRNA + S-adenosyl-L-homocysteine + H(+). The catalysed reaction is guanosine(2069) in 23S rRNA + S-adenosyl-L-methionine = N(2)-methylguanosine(2069) in 23S rRNA + S-adenosyl-L-homocysteine + H(+). In terms of biological role, specifically methylates the guanine in position 2445 (m2G2445) and the guanine in position 2069 (m7G2069) of 23S rRNA. This Stenotrophomonas maltophilia (strain R551-3) protein is Ribosomal RNA large subunit methyltransferase K/L.